Here is a 356-residue protein sequence, read N- to C-terminus: DNA polymerase IV (356 aa).

Positions 7–188 (IIHIDMDCFY…LPLKKIPRVG (182 aa)) constitute a UmuC domain. 2 residues coordinate Mg(2+): aspartate 11 and aspartate 106. Residue glutamate 107 is part of the active site.

Belongs to the DNA polymerase type-Y family. Monomer. Requires Mg(2+) as cofactor.

The protein resides in the cytoplasm. It catalyses the reaction DNA(n) + a 2'-deoxyribonucleoside 5'-triphosphate = DNA(n+1) + diphosphate. Poorly processive, error-prone DNA polymerase involved in untargeted mutagenesis. Copies undamaged DNA at stalled replication forks, which arise in vivo from mismatched or misaligned primer ends. These misaligned primers can be extended by PolIV. Exhibits no 3'-5' exonuclease (proofreading) activity. May be involved in translesional synthesis, in conjunction with the beta clamp from PolIII. The protein is DNA polymerase IV of Actinobacillus pleuropneumoniae serotype 5b (strain L20).